Here is a 311-residue protein sequence, read N- to C-terminus: Cyclin-dependent kinase B1-2 (311 aa).

The 300-residue stretch at 4–303 (YEKLEKVGEG…AKAALDHPYF (300 aa)) folds into the Protein kinase domain. ATP contacts are provided by residues 10–18 (VGEGTYGKV) and K33. A Phosphotyrosine modification is found at Y15. The Proton acceptor role is filled by D144. T178 carries the phosphothreonine modification.

It belongs to the protein kinase superfamily. CMGC Ser/Thr protein kinase family. CDC2/CDKX subfamily. As to quaternary structure, interacts with CKS1. As to expression, expressed in flowers.

It carries out the reaction L-seryl-[protein] + ATP = O-phospho-L-seryl-[protein] + ADP + H(+). The catalysed reaction is L-threonyl-[protein] + ATP = O-phospho-L-threonyl-[protein] + ADP + H(+). The enzyme catalyses [DNA-directed RNA polymerase] + ATP = phospho-[DNA-directed RNA polymerase] + ADP + H(+). Together with CDKB1-1, promotes both the last division in the stomatal cell lineage as well as the number of stomata. In collaboration with MYB124 and MYB88, restrict the G1/S transition and chloroplast and nuclear number during stomatal formation, and normally maintain fate and developmental progression throughout the stomatal cell lineage. The protein is Cyclin-dependent kinase B1-2 (CDKB1-2) of Arabidopsis thaliana (Mouse-ear cress).